Consider the following 1192-residue polypeptide: ATP-dependent helicase/deoxyribonuclease subunit B (1192 aa).

The protein belongs to the helicase family. AddB/RexB type 2 subfamily. As to quaternary structure, heterodimer of AddA and RexB. Mg(2+) serves as cofactor.

Functionally, the heterodimer acts as both an ATP-dependent DNA helicase and an ATP-dependent, dual-direction single-stranded exonuclease. Recognizes the chi site generating a DNA molecule suitable for the initiation of homologous recombination. This subunit has 5' -&gt; 3' nuclease activity but not helicase activity. This is ATP-dependent helicase/deoxyribonuclease subunit B from Pediococcus pentosaceus (strain ATCC 25745 / CCUG 21536 / LMG 10740 / 183-1w).